The chain runs to 384 residues: tRNA(Met) cytidine acetate ligase (384 aa).

Residues 7-20, glycine 101, asparagine 153, and arginine 178 each bind ATP; that span reads VAEY…HEFL.

It belongs to the TmcAL family.

The protein resides in the cytoplasm. The catalysed reaction is cytidine(34) in elongator tRNA(Met) + acetate + ATP = N(4)-acetylcytidine(34) in elongator tRNA(Met) + AMP + diphosphate. In terms of biological role, catalyzes the formation of N(4)-acetylcytidine (ac(4)C) at the wobble position of elongator tRNA(Met), using acetate and ATP as substrates. First activates an acetate ion to form acetyladenylate (Ac-AMP) and then transfers the acetyl group to tRNA to form ac(4)C34. The polypeptide is tRNA(Met) cytidine acetate ligase (Lactobacillus delbrueckii subsp. bulgaricus (strain ATCC 11842 / DSM 20081 / BCRC 10696 / JCM 1002 / NBRC 13953 / NCIMB 11778 / NCTC 12712 / WDCM 00102 / Lb 14)).